Consider the following 104-residue polypeptide: Large ribosomal subunit protein uL24 (104 aa).

Belongs to the universal ribosomal protein uL24 family. In terms of assembly, part of the 50S ribosomal subunit.

Functionally, one of two assembly initiator proteins, it binds directly to the 5'-end of the 23S rRNA, where it nucleates assembly of the 50S subunit. Its function is as follows. One of the proteins that surrounds the polypeptide exit tunnel on the outside of the subunit. The chain is Large ribosomal subunit protein uL24 from Neorickettsia sennetsu (strain ATCC VR-367 / Miyayama) (Ehrlichia sennetsu).